The sequence spans 299 residues: Coenzyme PQQ synthesis protein B (299 aa).

This sequence belongs to the PqqB family.

The protein operates within cofactor biosynthesis; pyrroloquinoline quinone biosynthesis. Functionally, may be involved in the transport of PQQ or its precursor to the periplasm. The protein is Coenzyme PQQ synthesis protein B of Xanthomonas oryzae pv. oryzae (strain MAFF 311018).